Here is a 757-residue protein sequence, read N- to C-terminus: Polyribonucleotide nucleotidyltransferase (757 aa).

2 residues coordinate Mg(2+): D487 and D493. A KH domain is found at 554-613 (PRITTVRVKPDQIRLIIGPGGKTIKGIVDQTGVAIDVEDDGTVNVASADSDAVKRALDII). The S1 motif domain occupies 623 to 691 (GATYKGTVKR…REGKIRLSRR (69 aa)). Residues 697–757 (PEGEEGDRAR…PPRERRERRS (61 aa)) form a disordered region. Composition is skewed to basic and acidic residues over residues 702-711 (GDRARERMAQ) and 719-757 (PRRD…ERRS).

It belongs to the polyribonucleotide nucleotidyltransferase family. Mg(2+) is required as a cofactor.

It localises to the cytoplasm. The enzyme catalyses RNA(n+1) + phosphate = RNA(n) + a ribonucleoside 5'-diphosphate. In terms of biological role, involved in mRNA degradation. Catalyzes the phosphorolysis of single-stranded polyribonucleotides processively in the 3'- to 5'-direction. The sequence is that of Polyribonucleotide nucleotidyltransferase from Sorangium cellulosum (strain So ce56) (Polyangium cellulosum (strain So ce56)).